The chain runs to 413 residues: MSAVMATYLLHDETDIRKKAEGIALGLTIGTWTDLPALEQEQLRKHKGEVVAIEELGESERVNAYFGKRLKRAIVKIAYPTVNFSADLPALLVTTFGKLSLDGEVRLLDLEFPDEWKRQFPGPRFGIDGIRDRVGVHNRPLLMSIFKGMIGRDLAYLTSELKKQALGGVDLVKDDEILFDSELLPFEKRITEGKAALQEVYEQTGKRTLYAVNLTGKTFALKDKAKRAAELGADVLLFNVFAYGLDVLQALREDEEIAVPIMAHPAFSGAVTPSEFYGVAPSLWLGKLLRLAGADFVLFPSPYGSVALEREQALGIARALTDDQEPFARAFPVPSAGIHPGLVPLIIRDFGLDTIVNAGGGIHGHPDGAIGGGRAFRAAIDAVLAGRPLRAAAAENEALQKAIDRWGVVEVEA.

Lys-98 acts as the Proton acceptor in catalysis. Residues Lys-147, Lys-173–Glu-176, His-264, Gly-337, and Gly-359–Gly-360 each bind substrate. Residues Lys-173, Asp-175, and Glu-176 each coordinate Mg(2+). N6-carboxylysine is present on Lys-173.

It belongs to the RuBisCO large chain family. Type IV subfamily. As to quaternary structure, homodimer. Requires Mg(2+) as cofactor.

It catalyses the reaction 5-methylsulfanyl-2,3-dioxopentyl phosphate = 2-hydroxy-5-methylsulfanyl-3-oxopent-1-enyl phosphate. It participates in amino-acid biosynthesis; L-methionine biosynthesis via salvage pathway; L-methionine from S-methyl-5-thio-alpha-D-ribose 1-phosphate: step 3/6. In terms of biological role, catalyzes the enolization of 2,3-diketo-5-methylthiopentyl-1-phosphate (DK-MTP-1-P) into 2-hydroxy-3-keto-5-methylthiopentenyl-1-phosphate (HK-MTPenyl-1-P). This is 2,3-diketo-5-methylthiopentyl-1-phosphate enolase (mtnW) from Geobacillus kaustophilus (strain HTA426).